A 96-amino-acid chain; its full sequence is ATP-dependent Clp protease adapter protein ClpS (96 aa).

This sequence belongs to the ClpS family. In terms of assembly, binds to the N-terminal domain of the chaperone ClpA.

In terms of biological role, involved in the modulation of the specificity of the ClpAP-mediated ATP-dependent protein degradation. This is ATP-dependent Clp protease adapter protein ClpS from Campylobacter jejuni subsp. jejuni serotype O:6 (strain 81116 / NCTC 11828).